The chain runs to 300 residues: Glutamyl-Q tRNA(Asp) synthetase (300 aa).

Residues 14-18 and E50 contribute to the L-glutamate site; that span reads RFAPT. The short motif at 17-27 is the 'HIGH' region element; the sequence is PTPSGFLHFGS. 4 residues coordinate Zn(2+): C106, C108, Y120, and C124. 2 residues coordinate L-glutamate: Y177 and R195. Residues 233-237 carry the 'KMSKS' region motif; it reads KLGKS. K236 provides a ligand contact to ATP.

It belongs to the class-I aminoacyl-tRNA synthetase family. GluQ subfamily. The cofactor is Zn(2+).

Its function is as follows. Catalyzes the tRNA-independent activation of glutamate in presence of ATP and the subsequent transfer of glutamate onto a tRNA(Asp). Glutamate is transferred on the 2-amino-5-(4,5-dihydroxy-2-cyclopenten-1-yl) moiety of the queuosine in the wobble position of the QUC anticodon. This Pseudomonas putida (strain ATCC 47054 / DSM 6125 / CFBP 8728 / NCIMB 11950 / KT2440) protein is Glutamyl-Q tRNA(Asp) synthetase.